A 67-amino-acid chain; its full sequence is Conotoxin VnMMSK-03 (67 aa).

An N-terminal signal peptide occupies residues 1-20 (MMSKLGVVLTICLLPFPLTA). Positions 21 to 50 (LPMDGDQPADLPALRTQDFEPERSPWFDPV) are excised as a propeptide. 3 cysteine pairs are disulfide-bonded: cysteine 53-cysteine 65, cysteine 54-cysteine 61, and cysteine 58-cysteine 64. Proline 63 is subject to 4-hydroxyproline.

This sequence belongs to the conotoxin M superfamily. As to expression, expressed by the venom duct.

It is found in the secreted. The polypeptide is Conotoxin VnMMSK-03 (Conus ventricosus (Mediterranean cone)).